The primary structure comprises 420 residues: Glycogen synthase kinase-3 beta (420 aa).

Positions 1-24 (MSGRPRTTSFAESCKPVQQPSSFG) are enriched in polar residues. Residues 1–50 (MSGRPRTTSFAESCKPVQQPSSFGSMKVSRDKDGSKVTTVVATPGQGPDR) form a disordered region. One can recognise a Protein kinase domain in the interval 56 to 340 (YTDTKVIGNG…PLDACAHSFF (285 aa)). Residues 62–70 (IGNGSFGVV) and Lys-85 each bind ATP. Catalysis depends on Asp-181, which acts as the Proton acceptor. The segment at 384-420 (NQAAVSTTSNTTSTSDSNTGERGSTNNAASASASNSS) is disordered. Low complexity-rich tracts occupy residues 389 to 401 (STTS…SDSN) and 409 to 420 (NNAASASASNSS).

This sequence belongs to the protein kinase superfamily. CMGC Ser/Thr protein kinase family. GSK-3 subfamily. Post-translationally, phosphorylated. Activated by phosphorylation at Tyr-216.

Its subcellular location is the cytoplasm. The protein localises to the nucleus. It localises to the cell membrane. It catalyses the reaction L-seryl-[tau protein] + ATP = O-phospho-L-seryl-[tau protein] + ADP + H(+). It carries out the reaction L-threonyl-[tau protein] + ATP = O-phospho-L-threonyl-[tau protein] + ADP + H(+). Its function is as follows. Plays a role in the organization of the formation of the main body axis of developing embryo. Acts as an inhibitor of differentiation of primary neurons. Inhibits the ability of ectopically expressed NEUROD1 and other bHLH factors to promote early retinal cell differentiation. May participate in the Wnt signaling pathway. May regulate the circadian clock via phosphorylation of the major clock components. The polypeptide is Glycogen synthase kinase-3 beta (gsk3b) (Xenopus laevis (African clawed frog)).